The primary structure comprises 555 residues: Putative protein NRT1/ PTR FAMILY 2.14 (555 aa).

12 helical membrane passes run 62–82, 93–113, 135–155, 181–201, 209–229, 234–254, 319–339, 363–383, 405–425, 441–461, 480–500, and 523–543; these read VTLI…GAFI, IVFG…TSLV, YSQL…TGGI, FFSW…TLVL, WGIG…LLFV, YVFV…LVAA, IKSI…FLAM, LIPP…WLPF, LQKV…SGIV, VFWL…TIVG, SLLY…VSIV, and CFYY…FWCA.

This sequence belongs to the major facilitator superfamily. Proton-dependent oligopeptide transporter (POT/PTR) (TC 2.A.17) family. In terms of tissue distribution, not detected.

The protein resides in the membrane. This Arabidopsis thaliana (Mouse-ear cress) protein is Putative protein NRT1/ PTR FAMILY 2.14 (NPF2.14).